The chain runs to 334 residues: N-acetyl-gamma-glutamyl-phosphate reductase (334 aa).

Cys145 is a catalytic residue. Residues Gly173–Gln192 are disordered.

This sequence belongs to the NAGSA dehydrogenase family. Type 1 subfamily.

It localises to the cytoplasm. The catalysed reaction is N-acetyl-L-glutamate 5-semialdehyde + phosphate + NADP(+) = N-acetyl-L-glutamyl 5-phosphate + NADPH + H(+). The protein operates within amino-acid biosynthesis; L-arginine biosynthesis; N(2)-acetyl-L-ornithine from L-glutamate: step 3/4. Catalyzes the NADPH-dependent reduction of N-acetyl-5-glutamyl phosphate to yield N-acetyl-L-glutamate 5-semialdehyde. This is N-acetyl-gamma-glutamyl-phosphate reductase from Methanocella arvoryzae (strain DSM 22066 / NBRC 105507 / MRE50).